The chain runs to 143 residues: ATP synthase epsilon chain (143 aa).

It belongs to the ATPase epsilon chain family. As to quaternary structure, F-type ATPases have 2 components, CF(1) - the catalytic core - and CF(0) - the membrane proton channel. CF(1) has five subunits: alpha(3), beta(3), gamma(1), delta(1), epsilon(1). CF(0) has three main subunits: a, b and c.

It localises to the cell membrane. Produces ATP from ADP in the presence of a proton gradient across the membrane. The polypeptide is ATP synthase epsilon chain (Lacticaseibacillus casei (strain BL23) (Lactobacillus casei)).